A 182-amino-acid chain; its full sequence is Gamma-crystallin N (182 aa).

Beta/gamma crystallin 'Greek key' domains lie at 6–46 (GKIT…HVES), 47–89 (GAWV…RPVG), and 95–136 (FRLE…KVYG). The tract at residues 153–182 (LSSSLQSDQGPEEATTKPATTQPPFLTANL) is disordered. Positions 169–182 (KPATTQPPFLTANL) are enriched in polar residues.

Belongs to the beta/gamma-crystallin family. In terms of assembly, monomer. As to expression, not specifically expressed in eye.

The polypeptide is Gamma-crystallin N (Homo sapiens (Human)).